A 549-amino-acid chain; its full sequence is Probable protein kinase UbiB (549 aa).

The Protein kinase domain maps to 123 to 501; that stretch reads DFDETPLASA…QQQAHKSNYM (379 aa). ATP contacts are provided by residues 129–137 and Lys152; that span reads LASASISQV. Asp287 functions as the Proton acceptor in the catalytic mechanism. 2 consecutive transmembrane segments (helical) span residues 499-516 and 521-540; these read NYML…TLLF and TLWS…FIGW.

Belongs to the ABC1 family. UbiB subfamily.

Its subcellular location is the cell inner membrane. It functions in the pathway cofactor biosynthesis; ubiquinone biosynthesis [regulation]. Functionally, is probably a protein kinase regulator of UbiI activity which is involved in aerobic coenzyme Q (ubiquinone) biosynthesis. The protein is Probable protein kinase UbiB of Shewanella sp. (strain W3-18-1).